The chain runs to 458 residues: Argininosuccinate lyase (458 aa).

It belongs to the lyase 1 family. Argininosuccinate lyase subfamily.

The protein resides in the cytoplasm. It carries out the reaction 2-(N(omega)-L-arginino)succinate = fumarate + L-arginine. It functions in the pathway amino-acid biosynthesis; L-arginine biosynthesis; L-arginine from L-ornithine and carbamoyl phosphate: step 3/3. The sequence is that of Argininosuccinate lyase from Neisseria meningitidis serogroup A / serotype 4A (strain DSM 15465 / Z2491).